The primary structure comprises 425 residues: Serine/threonine transporter SstT (425 aa).

The next 9 helical transmembrane spans lie at 11–31, 43–63, 91–111, 141–161, 182–202, 216–236, 290–310, 316–336, and 363–383; these read FLNG…LILA, FLGS…VFVL, LFAA…LVLV, ALVS…GFAL, IVHL…AGTI, LLAV…PIIV, IPLG…VLTL, LGIE…AVSA, and VAMQ…SAET.

This sequence belongs to the dicarboxylate/amino acid:cation symporter (DAACS) (TC 2.A.23) family.

The protein resides in the cell inner membrane. The enzyme catalyses L-serine(in) + Na(+)(in) = L-serine(out) + Na(+)(out). It carries out the reaction L-threonine(in) + Na(+)(in) = L-threonine(out) + Na(+)(out). Involved in the import of serine and threonine into the cell, with the concomitant import of sodium (symport system). The protein is Serine/threonine transporter SstT of Psychromonas ingrahamii (strain DSM 17664 / CCUG 51855 / 37).